Here is a 246-residue protein sequence, read N- to C-terminus: MISDSMTVEEIRLHLGLALKEKDFVVDKTGVKTIEIIGASFVADEPFIFGALNDEYIQRELEWYKSKSLFVKDIPGETPKIWQQVASSKGEINSNYGWAIWSEDNYAQYDMCLAELGQNPDSRRGIMIYTRPSMQFDYNKDGMSDFMCTNTVQYLIRDKKINAVVNMRSNDVVFGFRNDYAWQKYVLDKLVSDLNAGDPTRQYKAGSIIWNVGSLHVYSRHFYLVDHWWKTGETHIVKKDYKGEWK.

The active site involves Cys148.

The protein belongs to the thymidylate synthase family.

The catalysed reaction is dCMP + (6R)-5,10-methylene-5,6,7,8-tetrahydrofolate + H2O = 5-hydroxymethyl-dCMP + (6S)-5,6,7,8-tetrahydrofolate. The polypeptide is Deoxycytidylate 5-hydroxymethyltransferase (42) (Enterobacteria phage T6 (Bacteriophage T6)).